We begin with the raw amino-acid sequence, 295 residues long: MTSGRAMSPEETAPYGTGPARAESAPDAPAPIKRIRTHHLREMKQRGEKFAMLTAYEQYAAQTFDEAGIEVLLVGDSASNNVFANETSLPVTVDELIPLARAVSRSVRRALVVADLPFGSYQASPEQAYLTAVRFMKEANAHAVKLEGGIEMAPQVRKLTEGGIPVMAHIGFTPQSEHNLGGYRVQGRGEAAARVVAEAVAMEQAGAFAVVMEMVPGDVAAEVTKSVSIPTIGIGAGLDCDGQVLVWQDAFGLRTGRMPRFVKQYADLHGVLLQAARDYAADVKAGTFPGPEHTF.

The segment at 1 to 30 (MTSGRAMSPEETAPYGTGPARAESAPDAPA) is disordered. 2 residues coordinate Mg(2+): Asp76 and Asp115. 3-methyl-2-oxobutanoate-binding positions include 76-77 (DS), Asp115, and Lys145. Position 147 (Glu147) interacts with Mg(2+). Catalysis depends on Glu213, which acts as the Proton acceptor.

Belongs to the PanB family. As to quaternary structure, homodecamer; pentamer of dimers. Mg(2+) is required as a cofactor.

It localises to the cytoplasm. It catalyses the reaction 3-methyl-2-oxobutanoate + (6R)-5,10-methylene-5,6,7,8-tetrahydrofolate + H2O = 2-dehydropantoate + (6S)-5,6,7,8-tetrahydrofolate. It participates in cofactor biosynthesis; (R)-pantothenate biosynthesis; (R)-pantoate from 3-methyl-2-oxobutanoate: step 1/2. Catalyzes the reversible reaction in which hydroxymethyl group from 5,10-methylenetetrahydrofolate is transferred onto alpha-ketoisovalerate to form ketopantoate. This chain is 3-methyl-2-oxobutanoate hydroxymethyltransferase, found in Nocardioides sp. (strain ATCC BAA-499 / JS614).